Consider the following 170-residue polypeptide: Peptidyl-prolyl cis-trans isomerase-like 3 (170 aa).

Residues 1 to 160 (MSVTLHTDLG…QEFRIKSVTI (160 aa)) form the PPIase cyclophilin-type domain.

The protein belongs to the cyclophilin-type PPIase family. PPIL3 subfamily.

It carries out the reaction [protein]-peptidylproline (omega=180) = [protein]-peptidylproline (omega=0). Functionally, PPIases accelerate the folding of proteins. It catalyzes the cis-trans isomerization of proline imidic peptide bonds in oligopeptides. The sequence is that of Peptidyl-prolyl cis-trans isomerase-like 3 (cyp4) from Rhizopus delemar (strain RA 99-880 / ATCC MYA-4621 / FGSC 9543 / NRRL 43880) (Mucormycosis agent).